An 814-amino-acid polypeptide reads, in one-letter code: Rho GTPase-activating protein 26 (814 aa).

The region spanning 7–262 (EFSDCCLDSP…MKENPLEHKT (256 aa)) is the BAR domain. A PH domain is found at 265-369 (PYTMEGYLYV…WMEAMDGREP (105 aa)). The 186-residue stretch at 383-568 (AQLDSIGFSI…ILIENHEKIF (186 aa)) folds into the Rho-GAP domain. Disordered stretches follow at residues 584-618 (SRKK…QRNS) and 638-696 (SSSL…SSDS). Low complexity-rich tracts occupy residues 591 to 600 (SKPPSCSKRP) and 638 to 661 (SSSL…SRPS). Positions 662–672 (SLPPNPSPTSP) are enriched in pro residues. Serine 668 carries the phosphoserine modification. Threonine 670 bears the Phosphothreonine mark. At serine 671 the chain carries Phosphoserine. Over residues 673–696 (LSPSWPMFSAPSSPMPTSSTSSDS) the composition is skewed to low complexity. The SH3 domain occupies 756-814 (TPFRKAKALYACQAEHDSELSFTAGTVFDNVHPSQEPGWLEGTLNGKTGLIPENYVEFL).

Interacts with NYAP1, NYAP2 and MYO16. Interacts with MICAL1 and WDR44. Binds to the C-terminus of PTK2/FAK1. Post-translationally, phosphorylated in a PINK1-dependent fashion promoting retrograde mitochondrial trafficking and clustering.

Its subcellular location is the cell junction. The protein resides in the focal adhesion. It is found in the cytoplasm. It localises to the cytoskeleton. The protein localises to the endosome membrane. GTPase-activating protein for RHOA and CDC42. Facilitates mitochondrial quality control by promoting Parkin-mediated recruitment of autophagosomes to damaged mitochondria. Associates with MICAL1 on the endosomal membrane to promote Rab8-Rab10-dependent tubule extension. After dissociation of MICAL1, recruits WDR44 which connects the endoplasmic reticulum (ER) with the endosomal tubule, thereby participating in the export of a subset of neosynthesized proteins. This chain is Rho GTPase-activating protein 26 (Arhgap26), found in Mus musculus (Mouse).